A 127-amino-acid polypeptide reads, in one-letter code: Aspartate 1-decarboxylase (127 aa).

S25 acts as the Schiff-base intermediate with substrate; via pyruvic acid in catalysis. Position 25 is a pyruvic acid (Ser) (S25). T57 provides a ligand contact to substrate. The active-site Proton donor is the Y58. 73–75 (GAA) contacts substrate.

The protein belongs to the PanD family. In terms of assembly, heterooctamer of four alpha and four beta subunits. It depends on pyruvate as a cofactor. Post-translationally, is synthesized initially as an inactive proenzyme, which is activated by self-cleavage at a specific serine bond to produce a beta-subunit with a hydroxyl group at its C-terminus and an alpha-subunit with a pyruvoyl group at its N-terminus.

The protein localises to the cytoplasm. The enzyme catalyses L-aspartate + H(+) = beta-alanine + CO2. The protein operates within cofactor biosynthesis; (R)-pantothenate biosynthesis; beta-alanine from L-aspartate: step 1/1. Its function is as follows. Catalyzes the pyruvoyl-dependent decarboxylation of aspartate to produce beta-alanine. The chain is Aspartate 1-decarboxylase from Clostridium botulinum (strain ATCC 19397 / Type A).